Consider the following 294-residue polypeptide: Bidirectional sugar transporter SWEET13 (294 aa).

Over 1–7 (MALTNNL) the chain is Extracellular. Residues 8–28 (WAFVFGILGNIISFVVFLAPV) traverse the membrane as a helical segment. Residues 10–97 (FVFGILGNII…VLFVSYANKK (88 aa)) enclose the MtN3/slv 1 domain. Residues 29 to 42 (PTFVRICKKKSTEG) lie on the Cytoplasmic side of the membrane. Residues 43–63 (FQSLPYVSALFSAMLWIYYAM) form a helical membrane-spanning segment. At 64–69 (QKDGTA) the chain is on the extracellular side. The chain crosses the membrane as a helical span at residues 70-90 (FLLITINAFGCVIETIYIVLF). The Cytoplasmic segment spans residues 91 to 104 (VSYANKKTRISTLK). Residues 105–125 (VLGLLNFLGFAAIVLVCELLT) form a helical membrane-spanning segment. At 126 to 132 (KGSTREK) the chain is on the extracellular side. The chain crosses the membrane as a helical span at residues 133–153 (VLGGICVGFSVSVFAAPLSIM). The 84-residue stretch at 133-216 (VLGGICVGFS…MILYIIFKYY (84 aa)) folds into the MtN3/slv 2 domain. At 154 to 166 (RVVVRTRSVEFMP) the chain is on the cytoplasmic side. A helical membrane pass occupies residues 167-187 (FSLSLFLTISAVTWLFYGLAI). At 188–192 (KDFYV) the chain is on the extracellular side. Residues 193 to 213 (ALPNVLGAFLGAVQMILYIIF) traverse the membrane as a helical segment. The Cytoplasmic portion of the chain corresponds to 214-294 (KYYKTPVAQK…NKDVQKQSQV (81 aa)). Positions 273-294 (KSQNMTDPKDQINKDVQKQSQV) are disordered. Basic and acidic residues predominate over residues 279 to 294 (DPKDQINKDVQKQSQV).

Belongs to the SWEET sugar transporter family. As to quaternary structure, forms heterooligomers with SWEET1, SWEET3, SWEET6, SWEET7, SWEET8, SWEET9, SWEET11 and SWEET17. As to expression, expressed at low levels in leaves.

It localises to the cell membrane. Functionally, mediates both low-affinity uptake and efflux of sugar across the plasma membrane. Involved in nurturing the male gametophyte. The protein is Bidirectional sugar transporter SWEET13 of Arabidopsis thaliana (Mouse-ear cress).